We begin with the raw amino-acid sequence, 947 residues long: MQLPSSLVSVAESAVQNAQEAGYLQSWPNEVVEQFHYVSALSQFITETIHRDEALAQQLPTMLSELSRHQAYRTRLAALLAECPDEMSGHRVLRQFRNREMVYIAWKDFLHAWTLEESLRHLSQLAEAMIFETYQWQYKICCAEWGTPTNAEGEAQPMLIIGMGKLGGGELNFSSDIDLIFTYPENGETQGARRSIANAQFFTRLGQRIIKALDQQTFDGFCYRVDMRLRPFGESGPLVMSYAALEDYYQEQGRDWERYAMIKARVMGCEMYPQYQELRKMLRPFVFRRYIDFSAIQSLRRMKSMISSEVRRRGLTNNIKLGAGGIREIEFIAQVFQLIRGGREPSLRNRGLLETLSGIEELALLTPQEVSNLEAAYKYLRQLENLLQAMADKQTQTLPDCDIERLKLATAMQLESWDLLIEQTQQHMNKVHQVFETLIGDDEEDEGSTIARHFHELWDMANKQDVLELILEQDIQVEEPAIFSKAIINFKADLAKKTLGPRGREVLNRLMPKVFDAVFAHPDAQFGLPRVLHLLHNICTRTTYLELLDEHPAALVQLVRLCTASPMISEQLSRYPILLDELIDPQQLYNPIPLDSYRTELRDFLARIPEDDMEQQMEALRQFKQICILRIAAADIAGVLPVMKVSDHLTYLAEAIVEAVVSQAWLQVSEKYGEPTHVKDREGKGFAVIGYGKVGGWELGYNSDLDIVFMHDCPVNVYTDGKKEIDGRQFYLRLAQRIIHIFSTRTASGILYEVDTRLRPSGASGLLVSPTDAFDDYQHQDAWTWEHQALVRARMIYGDEPLAIAFHNTRHDVLCKPRDEQTLKKEVVEMREKMRDHLGGKKSGRFMIKQDVGGITDIEFLAQYLVLNYSHEKPKLTRWCDNVRIYETLIAQGVMEEDQAMQLIRAYTAMRNEIHHRNLLNLDADVVEDKFVAEREWVKQAWNQWFA.

Residues 1–443 (MQLPSSLVSV…VFETLIGDDE (443 aa)) are adenylyl removase. An adenylyl transferase region spans residues 451–947 (ARHFHELWDM…VKQAWNQWFA (497 aa)).

Belongs to the GlnE family. Requires Mg(2+) as cofactor.

It catalyses the reaction [glutamine synthetase]-O(4)-(5'-adenylyl)-L-tyrosine + phosphate = [glutamine synthetase]-L-tyrosine + ADP. It carries out the reaction [glutamine synthetase]-L-tyrosine + ATP = [glutamine synthetase]-O(4)-(5'-adenylyl)-L-tyrosine + diphosphate. Its function is as follows. Involved in the regulation of glutamine synthetase GlnA, a key enzyme in the process to assimilate ammonia. When cellular nitrogen levels are high, the C-terminal adenylyl transferase (AT) inactivates GlnA by covalent transfer of an adenylyl group from ATP to specific tyrosine residue of GlnA, thus reducing its activity. Conversely, when nitrogen levels are low, the N-terminal adenylyl removase (AR) activates GlnA by removing the adenylyl group by phosphorolysis, increasing its activity. The regulatory region of GlnE binds the signal transduction protein PII (GlnB) which indicates the nitrogen status of the cell. The sequence is that of Bifunctional glutamine synthetase adenylyltransferase/adenylyl-removing enzyme from Vibrio parahaemolyticus serotype O3:K6 (strain RIMD 2210633).